The sequence spans 242 residues: Probable transcriptional regulatory protein Bcep18194_A5621 (242 aa).

Belongs to the TACO1 family.

Its subcellular location is the cytoplasm. The sequence is that of Probable transcriptional regulatory protein Bcep18194_A5621 from Burkholderia lata (strain ATCC 17760 / DSM 23089 / LMG 22485 / NCIMB 9086 / R18194 / 383).